A 239-amino-acid chain; its full sequence is Sugar fermentation stimulation protein homolog (239 aa).

It belongs to the SfsA family.

In Mannheimia succiniciproducens (strain KCTC 0769BP / MBEL55E), this protein is Sugar fermentation stimulation protein homolog.